A 259-amino-acid chain; its full sequence is Energy-coupling factor transporter ATP-binding protein EcfA1 (259 aa).

The 228-residue stretch at Ile3 to Lys230 folds into the ABC transporter domain. ATP is bound at residue Gly38–Thr43. The active-site Proton acceptor is the Glu157.

Belongs to the ABC transporter superfamily. Energy-coupling factor EcfA family. As to quaternary structure, forms a heterodimer with EcfA2. Forms a stable energy-coupling factor (ECF) transporter complex composed of 2 membrane-embedded substrate-binding proteins (S component, RibU, BioY), 2 ATP-binding proteins (A component) and 2 transmembrane proteins (T component) upon coexpression in E.coli. Stable subcomplexes with both A plus T components can also be isolated. This complex interacts with at least 2 substrate-specific components, BioY and RibU.

The protein resides in the cell inner membrane. Its function is as follows. ATP-binding (A) component of a common energy-coupling factor (ECF) ABC-transporter complex. Unlike classic ABC transporters this ECF transporter provides the energy necessary to transport a number of different substrates. Expression of the complex plus RibU in E.coli allows riboflavin uptake; uptake does not occur in the absence of RibU or the EcfA1A2T complex. This chain is Energy-coupling factor transporter ATP-binding protein EcfA1, found in Thermotoga maritima (strain ATCC 43589 / DSM 3109 / JCM 10099 / NBRC 100826 / MSB8).